Consider the following 310-residue polypeptide: Calbindin-32 (310 aa).

6 consecutive EF-hand domains span residues Leu-35–Ser-70, Thr-84–Phe-120, Glu-131–Glu-166, Lys-177–Phe-212, Leu-224–Leu-259, and Thr-283–Ile-304. Residues Asp-48, Asp-50, Asn-52, Tyr-54, Glu-59, Asp-98, Asn-100, Asp-102, Lys-104, Glu-109, Asp-144, Asp-146, Ser-148, Tyr-150, Glu-155, Asp-190, Asn-192, Asp-194, Arg-196, Glu-201, Asp-237, Asp-239, Ser-241, Thr-243, and Glu-248 each contribute to the Ca(2+) site.

The protein belongs to the calbindin family. As to expression, expressed in a large number of neuron of the brain and the thoracic ganglion as well as in two small muscles of the thorax.

This is Calbindin-32 (Cbp53E) from Drosophila melanogaster (Fruit fly).